We begin with the raw amino-acid sequence, 48 residues long: Sperm protamine P1 (48 aa).

This sequence belongs to the protamine P1 family. Cross-linked by interchain disulfide bonds around the DNA-helix. Testis.

The protein resides in the nucleus. The protein localises to the chromosome. Functionally, protamines substitute for histones in the chromatin of sperm during the haploid phase of spermatogenesis. They compact sperm DNA into a highly condensed, stable and inactive complex. The sequence is that of Sperm protamine P1 (PRM1) from Cavia porcellus (Guinea pig).